A 339-amino-acid polypeptide reads, in one-letter code: RNA polymerase II holoenzyme cyclin-like subunit (339 aa).

The segment at 48–67 is disordered; that stretch reads PNSADSSNGNAANNGGGNGR. The segment covering 49 to 60 has biased composition (low complexity); sequence NSADSSNGNAAN. In terms of domain architecture, Cyclin N-terminal spans 93-194; it reads RIYCYFLIMK…LIEELQCYLI (102 aa).

Belongs to the cyclin family. Cyclin C subfamily. As to quaternary structure, component of the SRB8-11 complex, a regulatory module of the Mediator complex.

The protein localises to the nucleus. Functionally, component of the SRB8-11 complex. The SRB8-11 complex is a regulatory module of the Mediator complex which is itself involved in regulation of basal and activated RNA polymerase II-dependent transcription. The SRB8-11 complex may be involved in the transcriptional repression of a subset of genes regulated by Mediator. It may inhibit the association of the Mediator complex with RNA polymerase II to form the holoenzyme complex. The SRB8-11 complex phosphorylates the C-terminal domain (CTD) of the largest subunit of RNA polymerase II. In Candida glabrata (strain ATCC 2001 / BCRC 20586 / JCM 3761 / NBRC 0622 / NRRL Y-65 / CBS 138) (Yeast), this protein is RNA polymerase II holoenzyme cyclin-like subunit (SSN8).